The chain runs to 197 residues: ATP-dependent Clp protease proteolytic subunit (197 aa).

The Nucleophile role is filled by Ser98. The active site involves His123.

It belongs to the peptidase S14 family. In terms of assembly, fourteen ClpP subunits assemble into 2 heptameric rings which stack back to back to give a disk-like structure with a central cavity, resembling the structure of eukaryotic proteasomes.

The protein resides in the cytoplasm. It carries out the reaction Hydrolysis of proteins to small peptides in the presence of ATP and magnesium. alpha-casein is the usual test substrate. In the absence of ATP, only oligopeptides shorter than five residues are hydrolyzed (such as succinyl-Leu-Tyr-|-NHMec, and Leu-Tyr-Leu-|-Tyr-Trp, in which cleavage of the -Tyr-|-Leu- and -Tyr-|-Trp bonds also occurs).. Functionally, cleaves peptides in various proteins in a process that requires ATP hydrolysis. Has a chymotrypsin-like activity. Plays a major role in the degradation of misfolded proteins. The chain is ATP-dependent Clp protease proteolytic subunit from Anaplasma phagocytophilum (strain HZ).